A 69-amino-acid polypeptide reads, in one-letter code: Putative membrane protein insertion efficiency factor (69 aa).

The protein belongs to the UPF0161 family.

The protein localises to the cell membrane. Could be involved in insertion of integral membrane proteins into the membrane. This Alkaliphilus metalliredigens (strain QYMF) protein is Putative membrane protein insertion efficiency factor.